Reading from the N-terminus, the 80-residue chain is Large ribosomal subunit protein bL31B (80 aa).

The protein belongs to the bacterial ribosomal protein bL31 family. Type B subfamily. Part of the 50S ribosomal subunit.

The sequence is that of Large ribosomal subunit protein bL31B from Xylella fastidiosa (strain 9a5c).